A 487-amino-acid polypeptide reads, in one-letter code: Ribosome biogenesis protein YTM1 (487 aa).

A ubiquitin-like (UBL) domain region spans residues Val-13–Arg-95. 5 WD repeats span residues Ser-122–Ala-161, Gly-168–Gln-206, Gly-217–Ala-256, Gly-379–Gly-419, and Gly-451–Glu-487. The segment at Ser-253–Thr-277 is disordered.

Belongs to the WD repeat WDR12/YTM1 family. In terms of assembly, component of the NOP7 complex, composed of ERB1, NOP7 and YTM1. The complex is held together by ERB1, which interacts with NOP7 via its N-terminal domain and with YTM1 via a high-affinity interaction between the seven-bladed beta-propeller domains of the 2 proteins. The NOP7 complex associates with the 66S pre-ribosome. Interacts (via UBL domain) with MDN1 (via VWFA/MIDAS domain).

It localises to the nucleus. The protein localises to the nucleolus. Its subcellular location is the nucleoplasm. Component of the NOP7 complex, which is required for maturation of the 25S and 5.8S ribosomal RNAs and formation of the 60S ribosome. The chain is Ribosome biogenesis protein YTM1 from Podospora anserina (strain S / ATCC MYA-4624 / DSM 980 / FGSC 10383) (Pleurage anserina).